A 588-amino-acid polypeptide reads, in one-letter code: ustiloxin B cluster transcription factor ustR (588 aa).

Positions 11–38 form a DNA-binding region, zn(2)-C6 fungal-type; sequence CWTCRLRRKKCNEDGQPCSNCEARGVFC. Positions 68–92 are disordered; sequence RTRRARATPTNSINGEPRRPSIDMN.

It localises to the nucleus. Its function is as follows. Transcription factor that regulates the expression of the gene cluster that mediates the biosynthesis of ustiloxin B, an antimitotic tetrapeptide. The polypeptide is ustiloxin B cluster transcription factor ustR (Aspergillus flavus (strain ATCC 200026 / FGSC A1120 / IAM 13836 / NRRL 3357 / JCM 12722 / SRRC 167)).